The following is a 385-amino-acid chain: DNA replication and repair protein RecF (385 aa).

Residue 30–37 (GPNGFGKT) participates in ATP binding.

The protein belongs to the RecF family.

It is found in the cytoplasm. Functionally, the RecF protein is involved in DNA metabolism; it is required for DNA replication and normal SOS inducibility. RecF binds preferentially to single-stranded, linear DNA. It also seems to bind ATP. The protein is DNA replication and repair protein RecF of Mycobacterium marinum (strain ATCC BAA-535 / M).